Consider the following 1431-residue polypeptide: Zinc finger protein 687b (1431 aa).

Disordered stretches follow at residues 24-481 and 504-538; these read KEAI…RPLK and KGGA…TTAG. A compositionally biased stretch (low complexity) spans 61 to 73; the sequence is SPSPSTDSQSDPS. A compositionally biased stretch (polar residues) spans 103–122; the sequence is GFVSSGGSVHMSQSRGQPNG. Composition is skewed to low complexity over residues 174-188, 196-209, and 217-248; these read MQLL…EMNL, APAN…AASP, and LLST…ASSP. Positions 249–267 are enriched in polar residues; the sequence is LATSLTEPFNGTPRLSSSA. Positions 311 to 324 are enriched in low complexity; sequence SQSPSIPPSTSISP. Over residues 342-359 the composition is skewed to polar residues; it reads RAQQNWLSTAAQTGNGKS. Residues 361 to 377 show a composition bias toward basic and acidic residues; sequence PQEERNPEHVIEERDSP. Residues 385–410 are compositionally biased toward low complexity; the sequence is PKSSMPTSAVTKRSCSPAAASSPSAA. Residues 438-449 show a composition bias toward basic and acidic residues; it reads DGGKGDTDKIEV. Gly residues predominate over residues 519-528; that stretch reads QTGGRAGPVK. The C2H2-type 1; degenerate zinc finger occupies 674–692; that stretch reads YRCLECGDSFALERSLARH. Residues 754–816 are disordered; sequence TTPIGMLSPS…GPQSPQALMP (63 aa). Positions 760 to 775 are enriched in low complexity; the sequence is LSPSLSSPPLTSSTTP. Positions 781–802 are enriched in polar residues; it reads APSTSSPLKDSPSPGTASTQPS. The C2H2-type 2; degenerate zinc finger occupies 830–853; it reads FKCPECQAQFLSKAELVTHFQQIR. C2H2-type zinc fingers lie at residues 919 to 942, 947 to 970, 982 to 1004, and 1013 to 1036; these read YRCS…QTAH, HKCP…TSQH, YKCV…FDTH, and FKCP…KTAH. Residues 1041 to 1120 form a disordered region; that stretch reads VKAETPPTTS…QVSSPESGNM (80 aa). A compositionally biased stretch (low complexity) spans 1043–1057; that stretch reads AETPPTTSSPVSAPA. Residues 1058 to 1075 show a composition bias toward polar residues; sequence GNSTSKPKPATENNSDEL. Over residues 1080 to 1111 the composition is skewed to acidic residues; that stretch reads GEEEEEGEDEEGEQEGEEREDEEEEENEEEEQ. The C2H2-type 7 zinc finger occupies 1122–1145; it reads WRCKECKKRFPEREDYIDHMKNEH. The C2H2-type 8; degenerate zinc-finger motif lies at 1205-1227; it reads WHCSEGKRTFSSRLILEKHIRVR. The segment at 1225-1310 is disordered; sequence RVRHGIRSRQ…EEEDGTFRCT (86 aa). C2H2-type zinc fingers lie at residues 1307–1329 and 1337–1360; these read FRCT…IPVH and QQCL…FITH. The segment at 1362-1392 is disordered; that stretch reads LRQGQHDRNASPGASPQYGSPSSPKAGEDGD. The segment covering 1373–1384 has biased composition (polar residues); it reads PGASPQYGSPSS. Residues 1395–1425 form a C2H2-type 11 zinc finger; it reads VSCRVCGRRFDKASDLNTHFRTHGMAFITAH.

This sequence belongs to the krueppel C2H2-type zinc-finger protein family. As to expression, widely expressed with highest levels in eye, spleen and ovary.

Its subcellular location is the nucleus. Functionally, may be involved in transcriptional regulation. The polypeptide is Zinc finger protein 687b (znf687b) (Danio rerio (Zebrafish)).